A 212-amino-acid chain; its full sequence is Pyridoxine/pyridoxamine 5'-phosphate oxidase (212 aa).

Residues 61 to 66 (RSVLLK), 76 to 77 (YT), Lys83, and Gln105 each bind FMN. Residue Lys66 participates in substrate binding. 3 residues coordinate substrate: Tyr123, Arg127, and Ser131. FMN-binding positions include 140 to 141 (QS) and Trp185. Residue 191-193 (RLH) coordinates substrate. Arg195 contacts FMN.

Belongs to the pyridoxamine 5'-phosphate oxidase family. Homodimer. The cofactor is FMN.

The catalysed reaction is pyridoxamine 5'-phosphate + O2 + H2O = pyridoxal 5'-phosphate + H2O2 + NH4(+). It catalyses the reaction pyridoxine 5'-phosphate + O2 = pyridoxal 5'-phosphate + H2O2. It participates in cofactor metabolism; pyridoxal 5'-phosphate salvage; pyridoxal 5'-phosphate from pyridoxamine 5'-phosphate: step 1/1. Its pathway is cofactor metabolism; pyridoxal 5'-phosphate salvage; pyridoxal 5'-phosphate from pyridoxine 5'-phosphate: step 1/1. In terms of biological role, catalyzes the oxidation of either pyridoxine 5'-phosphate (PNP) or pyridoxamine 5'-phosphate (PMP) into pyridoxal 5'-phosphate (PLP). This Dichelobacter nodosus (strain VCS1703A) protein is Pyridoxine/pyridoxamine 5'-phosphate oxidase.